A 108-amino-acid polypeptide reads, in one-letter code: Putative septation protein SpoVG (108 aa).

It belongs to the SpoVG family.

Could be involved in septation. The polypeptide is Putative septation protein SpoVG (Bdellovibrio bacteriovorus (strain ATCC 15356 / DSM 50701 / NCIMB 9529 / HD100)).